Consider the following 290-residue polypeptide: Ribosomal RNA small subunit methyltransferase A (290 aa).

Residues asparagine 27, leucine 29, glycine 54, glutamate 75, aspartate 100, and asparagine 125 each contribute to the S-adenosyl-L-methionine site.

This sequence belongs to the class I-like SAM-binding methyltransferase superfamily. rRNA adenine N(6)-methyltransferase family. RsmA subfamily.

It localises to the cytoplasm. It catalyses the reaction adenosine(1518)/adenosine(1519) in 16S rRNA + 4 S-adenosyl-L-methionine = N(6)-dimethyladenosine(1518)/N(6)-dimethyladenosine(1519) in 16S rRNA + 4 S-adenosyl-L-homocysteine + 4 H(+). Its function is as follows. Specifically dimethylates two adjacent adenosines (A1518 and A1519) in the loop of a conserved hairpin near the 3'-end of 16S rRNA in the 30S particle. May play a critical role in biogenesis of 30S subunits. This Streptococcus pneumoniae (strain CGSP14) protein is Ribosomal RNA small subunit methyltransferase A.